The primary structure comprises 253 residues: Imidazole glycerol phosphate synthase subunit HisF (253 aa).

Active-site residues include Asp11 and Asp130.

The protein belongs to the HisA/HisF family. As to quaternary structure, heterodimer of HisH and HisF.

The protein localises to the cytoplasm. The enzyme catalyses 5-[(5-phospho-1-deoxy-D-ribulos-1-ylimino)methylamino]-1-(5-phospho-beta-D-ribosyl)imidazole-4-carboxamide + L-glutamine = D-erythro-1-(imidazol-4-yl)glycerol 3-phosphate + 5-amino-1-(5-phospho-beta-D-ribosyl)imidazole-4-carboxamide + L-glutamate + H(+). The protein operates within amino-acid biosynthesis; L-histidine biosynthesis; L-histidine from 5-phospho-alpha-D-ribose 1-diphosphate: step 5/9. In terms of biological role, IGPS catalyzes the conversion of PRFAR and glutamine to IGP, AICAR and glutamate. The HisF subunit catalyzes the cyclization activity that produces IGP and AICAR from PRFAR using the ammonia provided by the HisH subunit. This chain is Imidazole glycerol phosphate synthase subunit HisF, found in Thermoanaerobacter sp. (strain X514).